The following is a 250-amino-acid chain: MAVTKLVLVRHGESQWNKENRFTGWYDVDLSEKGVSEAKAAGKLLKEEGYSFDFAYTSVLKRAIHTLWNVLDELDQAWLPVEKSWKLNERHYGALQGLNKAETAEKYGDEQVKQWRRGFAVTPPELTKDDERYPGHDPRYAKLSEKELPLTESLALTIDRVIPYWNETILPRMKSGERVIIAAHGNSLRALVKYLDNMSEEEILELNIPTGVPLMYEFDENFKPLKRYYLGNADEIAAKAAAVANQGKAK.

Substrate contacts are provided by residues 10–17 (RHGESQWN), 23–24 (TG), R62, 89–92 (ERHY), K100, 116–117 (RR), and 185–186 (GN). The active-site Tele-phosphohistidine intermediate is the H11. E89 (proton donor/acceptor) is an active-site residue.

Belongs to the phosphoglycerate mutase family. BPG-dependent PGAM subfamily. As to quaternary structure, homodimer.

It catalyses the reaction (2R)-2-phosphoglycerate = (2R)-3-phosphoglycerate. Its pathway is carbohydrate degradation; glycolysis; pyruvate from D-glyceraldehyde 3-phosphate: step 3/5. Functionally, catalyzes the interconversion of 2-phosphoglycerate and 3-phosphoglycerate. This Escherichia coli O139:H28 (strain E24377A / ETEC) protein is 2,3-bisphosphoglycerate-dependent phosphoglycerate mutase.